Here is a 444-residue protein sequence, read N- to C-terminus: D(2) dopamine receptor (444 aa).

Topologically, residues 1–37 (MDPLNLSWYDDDLERQNWSRPFNGSEGKADRPHYNYY) are extracellular. 3 N-linked (GlcNAc...) asparagine glycosylation sites follow: Asn-5, Asn-17, and Asn-23. The helical transmembrane segment at 38–60 (AMLLTLLIFIIVFGNVLVCMAVS) threads the bilayer. At 61–70 (REKALQTTTN) the chain is on the cytoplasmic side. Residues 71-93 (YLIVSLAVADLLVATLVMPWVVY) form a helical membrane-spanning segment. The Extracellular portion of the chain corresponds to 94-108 (LEVVGEWKFSRIHCD). Cys-107 and Cys-182 are disulfide-bonded. The chain crosses the membrane as a helical span at residues 109–130 (IFVTLDVMMCTASILNLCAISI). Residues 131–151 (DRYTAVAMPMLYNTRYSSKRR) are Cytoplasmic-facing. A helical transmembrane segment spans residues 152-172 (VTVMIAIVWVLSFTISCPLLF). Topologically, residues 173-188 (GLNNTDQNECIIANPA) are extracellular. The helical transmembrane segment at 189–213 (FVVYSSIVSFYVPFIVTLLVYIKIY) threads the bilayer. Positions 211–374 (KIYIVLRKRR…SQQKEKKATQ (164 aa)) are interaction with PPP1R9B. Over 214–374 (IVLRKRRKRV…SQQKEKKATQ (161 aa)) the chain is Cytoplasmic. A disordered region spans residues 282-329 (EMLSSTSPPERTRYSPIPPSHHQLTLPDPSHHGLHSNPDSPAKPEKNG). A helical membrane pass occupies residues 375–396 (MLAIVLGVFIICWLPFFITHIL). The Extracellular portion of the chain corresponds to 397–410 (NIHCDCNIPPVLYS). Cys-400 and Cys-402 are oxidised to a cystine. Residues 411–432 (AFTWLGYVNSAVNPIIYTTFNI) form a helical membrane-spanning segment. Over 433–444 (EFRKAFMKILHC) the chain is Cytoplasmic. Cys-444 carries S-palmitoyl cysteine lipidation.

This sequence belongs to the G-protein coupled receptor 1 family. In terms of assembly, forms homo- and heterooligomers with DRD4. The interaction with DRD4 may modulate agonist-induced downstream signaling. Interacts with CADPS and CADPS2. Interacts with GPRASP1, PPP1R9B and CLIC6. Interacts with ARRB2. Interacts with HTR2A. Interacts with DRD1. Interacts with KCNA2. Palmitoylated. Palmitoylation which is required for proper localization to the plasma membrane and stability of the receptor could be carried on by ZDHHC4, ZDHHC3 and ZDHHC8. Expressed in the anterior lobe of the pituitary gland. Expressed ventral tegmental area of the midbrain and the pars compacta of the substantia nigra. Expressed seven times more than isoform short in the caudate nucleus. As to expression, expressed in the anterior lobe of the pituitary gland. Expressed in the caudate nucleus. Not expressed in the wider brain.

The protein localises to the cell membrane. Its subcellular location is the golgi apparatus membrane. Dopamine receptor whose activity is mediated by G proteins which inhibit adenylyl cyclase. Positively regulates postnatal regression of retinal hyaloid vessels via suppression of VEGFR2/KDR activity, downstream of OPN5. The protein is D(2) dopamine receptor (Drd2) of Rattus norvegicus (Rat).